A 407-amino-acid chain; its full sequence is SERPINE1 mRNA-binding protein 1 (407 aa).

A Phosphoserine modification is found at Ser-25. The segment at 33-227 (AAENKKKEAG…GSGSHNWGTV (195 aa)) is disordered. Positions 51 to 68 (AKSAAQAAAQTNSNAAGK) are enriched in low complexity. N6-acetyllysine; alternate is present on Lys-52. Lys-52 is covalently cross-linked (Glycyl lysine isopeptide (Lys-Gly) (interchain with G-Cter in SUMO1); alternate). The residue at position 68 (Lys-68) is an N6-acetyllysine. 3 stretches are compositionally biased toward basic and acidic residues: residues 70-80 (LRKESQKDRKN), 89-114 (ADKK…RRPD), and 122-162 (KLID…ERPI). Residue Lys-102 forms a Glycyl lysine isopeptide (Lys-Gly) (interchain with G-Cter in SUMO2) linkage. N6-acetyllysine is present on residues Lys-122 and Lys-140. The segment covering 164-182 (GRGGLGRGRGGRGRGMGRG) has biased composition (gly residues). Omega-N-methylarginine occurs at positions 165 and 188. Residues 183–199 (DGFDSRGKREFDRHSGS) are compositionally biased toward basic and acidic residues. Ser-197, Ser-199, Ser-203, Ser-205, and Ser-208 each carry phosphoserine. At Lys-211 the chain carries N6-acetyllysine; alternate. Lys-211 is covalently cross-linked (Glycyl lysine isopeptide (Lys-Gly) (interchain with G-Cter in SUMO2); alternate). An Omega-N-methylarginine modification is found at Arg-216. Ser-221 is modified (phosphoserine). Thr-226 carries the post-translational modification Phosphothreonine. Lys-228 is covalently cross-linked (Glycyl lysine isopeptide (Lys-Gly) (interchain with G-Cter in SUMO1); alternate). Residue Lys-228 forms a Glycyl lysine isopeptide (Lys-Gly) (interchain with G-Cter in SUMO2); alternate linkage. Phosphoserine occurs at positions 231, 234, and 237. The residue at position 234 (Ser-234) is a Phosphothreonine. The residue at position 240 (Lys-240) is a Phosphothreonine. Positions 242-256 (ISYNCSDLDQSNVTE) are enriched in polar residues. Disordered regions lie at residues 242 to 288 (ISYN…KEMT) and 327 to 407 (SKSE…PALA). Basic and acidic residues predominate over residues 261–274 (GEEHPVADTENKEN). Lys-280 participates in a covalent cross-link: Glycyl lysine isopeptide (Lys-Gly) (interchain with G-Cter in SUMO2). Residues 327-341 (SKSEEAHAEDSVMDH) are compositionally biased toward basic and acidic residues. Lys-328 is modified (N6-acetyllysine). Residue Ser-329 is modified to Phosphoserine. Gly residues predominate over residues 362 to 371 (GRPGRGGRGG). An omega-N-methylarginine mark is found at Arg-363, Arg-366, and Arg-369. A phosphoserine mark is found at Ser-391 and Ser-393.

Belongs to the SERBP1-HABP4 family. Associates with mature 80S ribosomes. Interacts with EEF2/eEF2; interaction sequesters EEF2/eEF2 at the A-site of the ribosome, thereby blocking the interaction sites of the mRNA-tRNA complex, promoting ribosome stabilization and hibernation. Interacts with SPIN1. Interacts with CHD3 and TDRD3. Interacts with ZDHHC17 (via ANK repeats). Post-translationally, phosphorylation by MTOR inhibits SERBP1 and relieves ribosome hibernation.

Its subcellular location is the cytoplasm. It is found in the nucleus. The protein resides in the perinuclear region. Ribosome-binding protein that promotes ribosome hibernation, a process during which ribosomes are stabilized in an inactive state and preserved from proteasomal degradation. Acts via its association with EEF2/eEF2 factor, sequestering EEF2/eEF2 at the A-site of the ribosome and promoting ribosome stabilization and storage in an inactive state. May also play a role in the regulation of mRNA stability: binds to the 3'-most 134 nt of the SERPINE1/PAI1 mRNA, a region which confers cyclic nucleotide regulation of message decay. Seems to play a role in PML-nuclear bodies formation. This is SERPINE1 mRNA-binding protein 1 from Mus musculus (Mouse).